The sequence spans 424 residues: Histidinol dehydrogenase (424 aa).

3 residues coordinate NAD(+): Tyr-121, Gln-183, and Asn-206. Ser-229, Gln-251, and His-254 together coordinate substrate. The Zn(2+) site is built by Gln-251 and His-254. Catalysis depends on proton acceptor residues Glu-319 and His-320. Residues His-320, Asp-353, Glu-407, and His-412 each contribute to the substrate site. Asp-353 lines the Zn(2+) pocket. His-412 lines the Zn(2+) pocket.

Belongs to the histidinol dehydrogenase family. Zn(2+) is required as a cofactor.

The enzyme catalyses L-histidinol + 2 NAD(+) + H2O = L-histidine + 2 NADH + 3 H(+). It participates in amino-acid biosynthesis; L-histidine biosynthesis; L-histidine from 5-phospho-alpha-D-ribose 1-diphosphate: step 9/9. Functionally, catalyzes the sequential NAD-dependent oxidations of L-histidinol to L-histidinaldehyde and then to L-histidine. This Geobacillus kaustophilus (strain HTA426) protein is Histidinol dehydrogenase.